We begin with the raw amino-acid sequence, 120 residues long: Small ribosomal subunit protein bS16 (120 aa).

Residues 81–120 are disordered; the sequence is GLAKRPARNNPQKAEPGEKSKERAAKRAEKAAAPAEDAAA. Over residues 95–110 the composition is skewed to basic and acidic residues; the sequence is EPGEKSKERAAKRAEK. The span at 111–120 shows a compositional bias: low complexity; sequence AAAPAEDAAA.

It belongs to the bacterial ribosomal protein bS16 family.

This is Small ribosomal subunit protein bS16 from Methylorubrum populi (strain ATCC BAA-705 / NCIMB 13946 / BJ001) (Methylobacterium populi).